We begin with the raw amino-acid sequence, 1916 residues long: Diacylglycerol kinase eta (1916 aa).

Positions 1 to 36 (MAHIKLDTLDVVQRPGTTRRSNSNSGRSSACSSGSL) are disordered. Residues 19–36 (RRSNSNSGRSSACSSGSL) are compositionally biased toward low complexity. Residues 82–175 (AIIKEGFLLK…WLGSLKTATT (94 aa)) enclose the PH domain. Phorbol-ester/DAG-type zinc fingers lie at residues 195–245 (HHHW…IANC) and 268–319 (PHQW…AVAC). A DAGKc domain is found at 350–486 (GNFSPLLVFV…DRWSIMVFEK (137 aa)). The segment covering 623–644 (DEINTKERRSSRSLRSSEKEAL) has biased composition (basic and acidic residues). Disordered stretches follow at residues 623–648 (DEIN…QSRA), 846–874 (DRGK…KEDN), 1018–1067 (TLCS…DDNP), and 1183–1214 (TSTS…SVKP). In terms of domain architecture, SAM spans 1853–1916 (WSVNEVVTWL…LQAIKDLSEN (64 aa)).

This sequence belongs to the eukaryotic diacylglycerol kinase family.

The protein localises to the cytoplasm. It carries out the reaction a 1,2-diacyl-sn-glycerol + ATP = a 1,2-diacyl-sn-glycero-3-phosphate + ADP + H(+). In terms of biological role, phosphorylates diacylglycerol (DAG) to generate phosphatidic acid (PA). The protein is Diacylglycerol kinase eta of Drosophila ananassae (Fruit fly).